The following is a 306-amino-acid chain: Ribonuclease HIII (306 aa).

An RNase H type-2 domain is found at Trp87 to Lys302. A divalent metal cation-binding residues include Asp93, Glu94, and Asp196.

The protein belongs to the RNase HII family. RnhC subfamily. Requires Mn(2+) as cofactor. The cofactor is Mg(2+).

It is found in the cytoplasm. It carries out the reaction Endonucleolytic cleavage to 5'-phosphomonoester.. Functionally, endonuclease that specifically degrades the RNA of RNA-DNA hybrids. The protein is Ribonuclease HIII of Exiguobacterium sibiricum (strain DSM 17290 / CCUG 55495 / CIP 109462 / JCM 13490 / 255-15).